The primary structure comprises 188 residues: ATP synthase subunit b 2 (188 aa).

The chain crosses the membrane as a helical span at residues Phe41–Pro61.

The protein belongs to the ATPase B chain family. In terms of assembly, F-type ATPases have 2 components, F(1) - the catalytic core - and F(0) - the membrane proton channel. F(1) has five subunits: alpha(3), beta(3), gamma(1), delta(1), epsilon(1). F(0) has three main subunits: a(1), b(2) and c(10-14). The alpha and beta chains form an alternating ring which encloses part of the gamma chain. F(1) is attached to F(0) by a central stalk formed by the gamma and epsilon chains, while a peripheral stalk is formed by the delta and b chains.

Its subcellular location is the cell inner membrane. Functionally, f(1)F(0) ATP synthase produces ATP from ADP in the presence of a proton or sodium gradient. F-type ATPases consist of two structural domains, F(1) containing the extramembraneous catalytic core and F(0) containing the membrane proton channel, linked together by a central stalk and a peripheral stalk. During catalysis, ATP synthesis in the catalytic domain of F(1) is coupled via a rotary mechanism of the central stalk subunits to proton translocation. Component of the F(0) channel, it forms part of the peripheral stalk, linking F(1) to F(0). The b'-subunit is a diverged and duplicated form of b found in plants and photosynthetic bacteria. The polypeptide is ATP synthase subunit b 2 (atpF2) (Bartonella bacilliformis (strain ATCC 35685 / KC583 / Herrer 020/F12,63)).